Here is a 759-residue protein sequence, read N- to C-terminus: GTPase-activating protein rrc-1 (759 aa).

The region spanning 164 to 243 (PAIAAAVVTK…PRDCVMLIDD (80 aa)) is the SH3 domain. Residues 280–473 (LELTDLYMRT…FFIENSESLF (194 aa)) form the Rho-GAP domain. The segment at 591 to 624 (ARSMRPTSRPPPSPRTRRARFSNGSSNNVQKLNE) is disordered. The segment covering 612–622 (SNGSSNNVQKL) has biased composition (polar residues).

As to expression, expressed in coelomocytes, excretory cells, uterine-seam cells and GLR cells.

Functionally, functions as a GTPase-activating protein (GAP) for ced-10/rac-1 and CDC42. The sequence is that of GTPase-activating protein rrc-1 (rrc-1) from Caenorhabditis elegans.